Reading from the N-terminus, the 276-residue chain is Putative hydro-lyase Xaut_1503 (276 aa).

Belongs to the D-glutamate cyclase family.

The protein is Putative hydro-lyase Xaut_1503 of Xanthobacter autotrophicus (strain ATCC BAA-1158 / Py2).